The sequence spans 201 residues: Phosphoheptose isomerase (201 aa).

Residues 36 to 195 (IAKSLNEGGK…EDILFEIPAA (160 aa)) form the SIS domain. 51 to 53 (NGG) is a substrate binding site. 2 residues coordinate Zn(2+): His60 and Glu64. Residues Glu64, 93–94 (ND), 119–121 (STS), Ser124, and Gln171 each bind substrate. The Zn(2+) site is built by Gln171 and His179.

The protein belongs to the SIS family. GmhA subfamily. Zn(2+) serves as cofactor.

It localises to the cytoplasm. It carries out the reaction 2 D-sedoheptulose 7-phosphate = D-glycero-alpha-D-manno-heptose 7-phosphate + D-glycero-beta-D-manno-heptose 7-phosphate. It functions in the pathway carbohydrate biosynthesis; D-glycero-D-manno-heptose 7-phosphate biosynthesis; D-glycero-alpha-D-manno-heptose 7-phosphate and D-glycero-beta-D-manno-heptose 7-phosphate from sedoheptulose 7-phosphate: step 1/1. Its function is as follows. Catalyzes the isomerization of sedoheptulose 7-phosphate in D-glycero-D-manno-heptose 7-phosphate. This chain is Phosphoheptose isomerase, found in Thermodesulfovibrio yellowstonii (strain ATCC 51303 / DSM 11347 / YP87).